Here is a 234-residue protein sequence, read N- to C-terminus: LexA repressor (234 aa).

The segment at residues 26 to 46 is a DNA-binding region (H-T-H motif); sequence FEEMKEALDLKSKSGVHRLIS. The disordered stretch occupies residues 73-100; that stretch reads AVGKAAPVSQREAANTNSALPPLRAAPK. Positions 91 to 100 are enriched in low complexity; that stretch reads ALPPLRAAPK. Residues Ser154 and Lys192 each act as for autocatalytic cleavage activity in the active site.

The protein belongs to the peptidase S24 family. Homodimer.

The enzyme catalyses Hydrolysis of Ala-|-Gly bond in repressor LexA.. Represses a number of genes involved in the response to DNA damage (SOS response), including recA and lexA. In the presence of single-stranded DNA, RecA interacts with LexA causing an autocatalytic cleavage which disrupts the DNA-binding part of LexA, leading to derepression of the SOS regulon and eventually DNA repair. The sequence is that of LexA repressor from Novosphingobium aromaticivorans (strain ATCC 700278 / DSM 12444 / CCUG 56034 / CIP 105152 / NBRC 16084 / F199).